Consider the following 185-residue polypeptide: Ribosome-recycling factor (185 aa).

The protein belongs to the RRF family.

The protein resides in the cytoplasm. Functionally, responsible for the release of ribosomes from messenger RNA at the termination of protein biosynthesis. May increase the efficiency of translation by recycling ribosomes from one round of translation to another. The chain is Ribosome-recycling factor from Coxiella burnetii (strain RSA 493 / Nine Mile phase I).